The following is a 298-amino-acid chain: Olfactory receptor 52Z1P (298 aa).

Residues 1 to 14 are Extracellular-facing; that stretch reads MGIPGLEGLHTWIS. The chain crosses the membrane as a helical span at residues 15-35; sequence IPFSFMYIVAVAGNIFLIFLI. The Cytoplasmic segment spans residues 36–43; that stretch reads MTERSLHE. A helical membrane pass occupies residues 44–64; sequence PMYLFLSMLASADFLLATAAA. At 65–85 the chain is on the extracellular side; the sequence is PKVLAILWFHSMDISFGSCVS. The cysteines at positions 83 and 164 are disulfide-linked. Residues 86–106 traverse the membrane as a helical segment; that stretch reads QMFFIHFIFVAESAILLAMAF. Residues 107 to 128 are Cytoplasmic-facing; it reads DRYVAICYPLRYTILTSSAVRK. A helical transmembrane segment spans residues 129 to 149; that stretch reads IGIAAVVRSFFICCPFIFLVY. Over 150–178 the chain is Extracellular; it reads RLTYCGRNIIPHSYCEHIARLACGNINVN. The chain crosses the membrane as a helical span at residues 179 to 199; it reads IIYGLTVALLSTGLDIVLIII. Residues 200–223 are Cytoplasmic-facing; it reads SYTMILHSVFQISSWAARFKALST. A helical transmembrane segment spans residues 224–244; sequence CGSHICVIFMFYTPAFFSFLA. Residues 245 to 257 lie on the Extracellular side of the membrane; sequence HRFGGKTIPHHIH. Residues 258–278 traverse the membrane as a helical segment; it reads ILVGSLYVLVPPMLNPIIYGV. The Cytoplasmic portion of the chain corresponds to 279–298; that stretch reads KTKQIKDRVILLFSPISVCC.

Belongs to the G-protein coupled receptor 1 family.

It localises to the cell membrane. Functionally, odorant receptor. In Homo sapiens (Human), this protein is Olfactory receptor 52Z1P.